A 147-amino-acid chain; its full sequence is Protein Turandot Z (147 aa).

Residues 1-23 form the signal peptide; the sequence is MYFAIRLSFVLAVLICLTGNGSA.

Belongs to the Turandot family.

It localises to the secreted. In terms of biological role, a humoral factor that may play a role in stress tolerance. This chain is Protein Turandot Z, found in Drosophila melanogaster (Fruit fly).